A 50-amino-acid polypeptide reads, in one-letter code: Small ribosomal subunit protein eS31 (50 aa).

Zn(2+) is bound by residues cysteine 22, cysteine 25, cysteine 40, and cysteine 43. The C4-type zinc-finger motif lies at 22 to 43 (CPRCGPGVFMADHGDRWACGKC).

It belongs to the eukaryotic ribosomal protein eS31 family. In terms of assembly, part of the 30S ribosomal subunit. Zn(2+) is required as a cofactor.

The chain is Small ribosomal subunit protein eS31 from Pyrococcus horikoshii (strain ATCC 700860 / DSM 12428 / JCM 9974 / NBRC 100139 / OT-3).